A 79-amino-acid polypeptide reads, in one-letter code: Putative defensin-like protein 146 (79 aa).

Residues 1 to 25 (MMKNQFQLSLIILTFFILLELGVMG) form the signal peptide. Intrachain disulfides connect cysteine 35/cysteine 78, cysteine 46/cysteine 66, cysteine 51/cysteine 72, and cysteine 55/cysteine 74.

Belongs to the DEFL family.

The protein resides in the secreted. The polypeptide is Putative defensin-like protein 146 (LCR9) (Arabidopsis thaliana (Mouse-ear cress)).